The sequence spans 275 residues: Tryptophan synthase alpha chain (275 aa).

Catalysis depends on proton acceptor residues Glu-49 and Asp-60.

This sequence belongs to the TrpA family. As to quaternary structure, tetramer of two alpha and two beta chains.

The enzyme catalyses (1S,2R)-1-C-(indol-3-yl)glycerol 3-phosphate + L-serine = D-glyceraldehyde 3-phosphate + L-tryptophan + H2O. The protein operates within amino-acid biosynthesis; L-tryptophan biosynthesis; L-tryptophan from chorismate: step 5/5. The alpha subunit is responsible for the aldol cleavage of indoleglycerol phosphate to indole and glyceraldehyde 3-phosphate. The sequence is that of Tryptophan synthase alpha chain from Psychrobacter sp. (strain PRwf-1).